The sequence spans 393 residues: CCA-adding enzyme (393 aa).

The ATP site is built by G27 and R30. Positions 27 and 30 each coordinate CTP. Mg(2+) contacts are provided by D40 and D42. ATP-binding residues include R111, D154, R157, R160, and R163. CTP is bound by residues R111, D154, R157, R160, and R163.

Belongs to the tRNA nucleotidyltransferase/poly(A) polymerase family. Bacterial CCA-adding enzyme type 3 subfamily. In terms of assembly, homodimer. It depends on Mg(2+) as a cofactor.

The catalysed reaction is a tRNA precursor + 2 CTP + ATP = a tRNA with a 3' CCA end + 3 diphosphate. It catalyses the reaction a tRNA with a 3' CCA end + 2 CTP + ATP = a tRNA with a 3' CCACCA end + 3 diphosphate. Catalyzes the addition and repair of the essential 3'-terminal CCA sequence in tRNAs without using a nucleic acid template. Adds these three nucleotides in the order of C, C, and A to the tRNA nucleotide-73, using CTP and ATP as substrates and producing inorganic pyrophosphate. tRNA 3'-terminal CCA addition is required both for tRNA processing and repair. Also involved in tRNA surveillance by mediating tandem CCA addition to generate a CCACCA at the 3' terminus of unstable tRNAs. While stable tRNAs receive only 3'-terminal CCA, unstable tRNAs are marked with CCACCA and rapidly degraded. The sequence is that of CCA-adding enzyme from Listeria monocytogenes serovar 1/2a (strain ATCC BAA-679 / EGD-e).